Here is a 200-residue protein sequence, read N- to C-terminus: Protein-methionine-sulfoxide reductase heme-binding subunit MsrQ (200 aa).

5 helical membrane-spanning segments follow: residues 8-28 (ITWL…WLFY), 54-74 (LLLA…PLLI), 79-99 (LLGL…SLLE), 116-136 (PYLT…LTSF), and 153-173 (FIYL…KILS).

The protein belongs to the MsrQ family. In terms of assembly, heterodimer of a catalytic subunit (MsrP) and a heme-binding subunit (MsrQ). FMN serves as cofactor. The cofactor is heme b.

The protein resides in the cell inner membrane. In terms of biological role, part of the MsrPQ system that repairs oxidized periplasmic proteins containing methionine sulfoxide residues (Met-O), using respiratory chain electrons. Thus protects these proteins from oxidative-stress damage caused by reactive species of oxygen and chlorine generated by the host defense mechanisms. MsrPQ is essential for the maintenance of envelope integrity under bleach stress, rescuing a wide series of structurally unrelated periplasmic proteins from methionine oxidation. MsrQ provides electrons for reduction to the reductase catalytic subunit MsrP, using the quinone pool of the respiratory chain. The polypeptide is Protein-methionine-sulfoxide reductase heme-binding subunit MsrQ (Cronobacter sakazakii (strain ATCC BAA-894) (Enterobacter sakazakii)).